Here is a 1073-residue protein sequence, read N- to C-terminus: Probable cellulose synthase A catalytic subunit 2 [UDP-forming] (1073 aa).

Over 1-270 (MDGAKSGKQC…SSSRINPYRM (270 aa)) the chain is Cytoplasmic. Cysteine 13, cysteine 16, cysteine 32, cysteine 35, cysteine 40, cysteine 43, cysteine 55, and cysteine 58 together coordinate Zn(2+). The RING-type; degenerate zinc finger occupies 13–59 (CQICGDGVGTAADGELFTACDVCGFPVCRPCYEYERKDGSQACPQCK). The disordered stretch occupies residues 66–98 (KGSPPILGDESDDVDADDASDVNYPTSGNQDHK). The span at 74–85 (DESDDVDADDAS) shows a compositional bias: acidic residues. A helical membrane pass occupies residues 271-291 (VIVLRLIVLCIFLHYRITNPV). The Extracellular segment spans residues 292–293 (RN). A helical transmembrane segment spans residues 294 to 314 (AYPLWLLSVICEIWFALSWIL). At 315 to 856 (DQFPKWSPIN…INTTIYPLTS (542 aa)) the chain is on the cytoplasmic side. UDP-alpha-D-glucose-binding residues include serine 353, lysine 359, glutamate 360, and aspartate 389. Residue aspartate 389 is part of the active site. A coiled-coil region spans residues 443–470 (VKDRRAMKREYEEFKVRVNALVAKAQKV). Lysine 530 provides a ligand contact to UDP-alpha-D-glucose. Residues lysine 531 and aspartate 555 each coordinate Mn(2+). Residues 655-676 (GGRKKTKKSKEKSTEKKKSHKH) are disordered. Residue aspartate 773 is part of the active site. The helical transmembrane segment at 857–877 (IPLLLYCILPAICLLTGKFII) threads the bilayer. Residues 878 to 882 (PEISN) are Extracellular-facing. A helical transmembrane segment spans residues 883 to 903 (FASIWFISLFLSIFATGILEM). The Cytoplasmic portion of the chain corresponds to 904–918 (RWSGVGIDEWWRNEQ). Residues 919 to 939 (FWVIGGISAHLFAVFQGLLKV) form a helical membrane-spanning segment. Topologically, residues 940-969 (LAGIDTSFTVTSKASDEEGDFAELYMFKWT) are extracellular. Residues 970-990 (TLLIPPTTILIINLVGVVAGI) traverse the membrane as a helical segment. Over 991 to 1001 (SYAINSGYQSW) the chain is Cytoplasmic. A helical membrane pass occupies residues 1002–1022 (GPLFGKLFFAFWVIVHLYPFL). Over 1023-1031 (KGLMGRQNR) the chain is Extracellular. The chain crosses the membrane as a helical span at residues 1032 to 1052 (TPTIVVVWAILLASIFSLLWV). Residues 1053-1073 (RIDPFTTRVTGPDTQKCGINC) lie on the Cytoplasmic side of the membrane.

It belongs to the glycosyltransferase 2 family. Plant cellulose synthase subfamily. It depends on Mn(2+) as a cofactor. Zn(2+) is required as a cofactor.

Its subcellular location is the cell membrane. The catalysed reaction is [(1-&gt;4)-beta-D-glucosyl](n) + UDP-alpha-D-glucose = [(1-&gt;4)-beta-D-glucosyl](n+1) + UDP + H(+). It participates in glycan metabolism; plant cellulose biosynthesis. Probable catalytic subunit of cellulose synthase terminal complexes ('rosettes'), required for beta-1,4-glucan microfibril crystallization, a major mechanism of the cell wall formation. This Oryza sativa subsp. japonica (Rice) protein is Probable cellulose synthase A catalytic subunit 2 [UDP-forming] (CESA2).